The sequence spans 354 residues: UDP-N-acetylglucosamine--N-acetylmuramyl-(pentapeptide) pyrophosphoryl-undecaprenol N-acetylglucosamine transferase (354 aa).

UDP-N-acetyl-alpha-D-glucosamine is bound by residues 11–13 (TAG), Arg-164, Ser-194, and Gln-289.

It belongs to the glycosyltransferase 28 family. MurG subfamily.

Its subcellular location is the cell membrane. It carries out the reaction di-trans,octa-cis-undecaprenyl diphospho-N-acetyl-alpha-D-muramoyl-L-alanyl-D-glutamyl-meso-2,6-diaminopimeloyl-D-alanyl-D-alanine + UDP-N-acetyl-alpha-D-glucosamine = di-trans,octa-cis-undecaprenyl diphospho-[N-acetyl-alpha-D-glucosaminyl-(1-&gt;4)]-N-acetyl-alpha-D-muramoyl-L-alanyl-D-glutamyl-meso-2,6-diaminopimeloyl-D-alanyl-D-alanine + UDP + H(+). The protein operates within cell wall biogenesis; peptidoglycan biosynthesis. Its function is as follows. Cell wall formation. Catalyzes the transfer of a GlcNAc subunit on undecaprenyl-pyrophosphoryl-MurNAc-pentapeptide (lipid intermediate I) to form undecaprenyl-pyrophosphoryl-MurNAc-(pentapeptide)GlcNAc (lipid intermediate II). The chain is UDP-N-acetylglucosamine--N-acetylmuramyl-(pentapeptide) pyrophosphoryl-undecaprenol N-acetylglucosamine transferase from Clostridium botulinum (strain Langeland / NCTC 10281 / Type F).